The primary structure comprises 793 residues: Pleckstrin homology domain-containing family H member 3 (793 aa).

An N-terminal signal peptide occupies residues 1 to 18; that stretch reads MPLPGGLWWLLCCRRGFT. Positions 28-62 are disordered; sequence ELSGDGDEDEDEETFELRTPSPAGGGRGPLEVTLT. The segment covering 29 to 41 has biased composition (acidic residues); sequence LSGDGDEDEDEET. Ser-30 carries the phosphoserine modification. One can recognise a PH domain in the interval 95–199; the sequence is DIVVKGWLYR…WGVALREVIA (105 aa). A MyTH4 domain is found at 237–399; sequence HTSGALYAPL…PSLAEISALS (163 aa). An FERM domain is found at 404–754; it reads LLCTVHCPGA…AYLANPSPER (351 aa). Disordered stretches follow at residues 554–586 and 598–622; these read VPLP…SAAL and KRRA…EGGG. Over residues 598–608 the composition is skewed to basic residues; it reads KRRAERARRGG. Omega-N-methylarginine occurs at positions 638 and 642. The segment covering 750-762 has biased composition (low complexity); that stretch reads PSPERPCSSSSPP. The interval 750–793 is disordered; sequence PSPERPCSSSSPPCQDLPDTSPPSQRPGLDEPQGQSGCLGQLQD. The span at 782–793 shows a compositional bias: polar residues; it reads QGQSGCLGQLQD.

This chain is Pleckstrin homology domain-containing family H member 3 (PLEKHH3), found in Homo sapiens (Human).